We begin with the raw amino-acid sequence, 247 residues long: Adenosylcobinamide-GDP ribazoletransferase (247 aa).

The next 5 membrane-spanning stretches (helical) occupy residues 34–54, 59–79, 113–133, 138–158, and 194–214; these read IITF…VFMV, CGAP…TGGF, GGLA…ELAL, ILAS…LLMY, and VLLP…AIFI.

The protein belongs to the CobS family. Mg(2+) serves as cofactor.

The protein resides in the cell inner membrane. The enzyme catalyses alpha-ribazole + adenosylcob(III)inamide-GDP = adenosylcob(III)alamin + GMP + H(+). It catalyses the reaction alpha-ribazole 5'-phosphate + adenosylcob(III)inamide-GDP = adenosylcob(III)alamin 5'-phosphate + GMP + H(+). It participates in cofactor biosynthesis; adenosylcobalamin biosynthesis; adenosylcobalamin from cob(II)yrinate a,c-diamide: step 7/7. Functionally, joins adenosylcobinamide-GDP and alpha-ribazole to generate adenosylcobalamin (Ado-cobalamin). Also synthesizes adenosylcobalamin 5'-phosphate from adenosylcobinamide-GDP and alpha-ribazole 5'-phosphate. The protein is Adenosylcobinamide-GDP ribazoletransferase of Escherichia coli O81 (strain ED1a).